The primary structure comprises 342 residues: Deoxyguanosinetriphosphate triphosphohydrolase-like protein (342 aa).

In terms of domain architecture, HD spans 75 to 190 (RLVHTLEVSQ…VRFADKIAYV (116 aa)).

This sequence belongs to the dGTPase family. Type 2 subfamily.

This Clostridium perfringens (strain SM101 / Type A) protein is Deoxyguanosinetriphosphate triphosphohydrolase-like protein.